The chain runs to 121 residues: Large ribosomal subunit protein bL12 (121 aa).

Belongs to the bacterial ribosomal protein bL12 family. In terms of assembly, homodimer. Part of the ribosomal stalk of the 50S ribosomal subunit. Forms a multimeric L10(L12)X complex, where L10 forms an elongated spine to which 2 to 4 L12 dimers bind in a sequential fashion. Binds GTP-bound translation factors.

Functionally, forms part of the ribosomal stalk which helps the ribosome interact with GTP-bound translation factors. Is thus essential for accurate translation. The sequence is that of Large ribosomal subunit protein bL12 from Lachnospira eligens (strain ATCC 27750 / DSM 3376 / VPI C15-48 / C15-B4) (Eubacterium eligens).